The sequence spans 260 residues: Troponin I 3 (260 aa).

The segment covering 192 to 219 (DLDEIMAKKKGTADGKPEWSKKEKKEEE) has biased composition (basic and acidic residues). The segment at 192 to 260 (DLDEIMAKKK…EEEEEEEEEE (69 aa)) is disordered. The segment covering 231–260 (PEAEPEPEAAEPAAEEPEAEEEEEEEEEEE) has biased composition (acidic residues).

Belongs to the troponin I family. As to expression, expressed in body wall muscle from first larval stage to adult. In adults expression is predominantly in vulval and anal muscles, body wall muscle expression is weaker. Also expressed in vulval muscles of hermaphrodites and the sex muscles of males.

Troponin I is the inhibitory subunit of troponin, the thin filament regulatory complex which confers calcium-sensitivity to muscle actomyosin ATPase activity. This Caenorhabditis elegans protein is Troponin I 3 (tni-3).